A 153-amino-acid chain; its full sequence is Urease accessory protein UreE (153 aa).

This sequence belongs to the UreE family.

The protein localises to the cytoplasm. Involved in urease metallocenter assembly. Binds nickel. Probably functions as a nickel donor during metallocenter assembly. The sequence is that of Urease accessory protein UreE from Acetivibrio thermocellus (strain ATCC 27405 / DSM 1237 / JCM 9322 / NBRC 103400 / NCIMB 10682 / NRRL B-4536 / VPI 7372) (Clostridium thermocellum).